Reading from the N-terminus, the 239-residue chain is tRNA (guanine-N(7)-)-methyltransferase (239 aa).

The S-adenosyl-L-methionine site is built by Glu69, Glu94, Asp121, and Asp144. Residue Asp144 is part of the active site. Substrate-binding positions include Lys148, Asp180, and Thr217–Glu220.

This sequence belongs to the class I-like SAM-binding methyltransferase superfamily. TrmB family. In terms of assembly, monomer.

The enzyme catalyses guanosine(46) in tRNA + S-adenosyl-L-methionine = N(7)-methylguanosine(46) in tRNA + S-adenosyl-L-homocysteine. Its pathway is tRNA modification; N(7)-methylguanine-tRNA biosynthesis. Its function is as follows. Catalyzes the formation of N(7)-methylguanine at position 46 (m7G46) in tRNA. This is tRNA (guanine-N(7)-)-methyltransferase from Buchnera aphidicola subsp. Acyrthosiphon pisum (strain Tuc7).